The chain runs to 640 residues: Calpain-5 (640 aa).

The Calpain catalytic domain occupies Leu26 to Ile343. Residues Cys81, His252, and Asn284 contribute to the active site. The interval Asn344–Arg496 is domain III. The C2 domain maps to Arg499–Ser617.

Belongs to the peptidase C2 family.

Calcium-regulated non-lysosomal thiol-protease. This Mus musculus (Mouse) protein is Calpain-5 (Capn5).